The following is a 156-amino-acid chain: Small ribosomal subunit protein uS7 (156 aa).

Belongs to the universal ribosomal protein uS7 family. In terms of assembly, part of the 30S ribosomal subunit. Contacts proteins S9 and S11.

One of the primary rRNA binding proteins, it binds directly to 16S rRNA where it nucleates assembly of the head domain of the 30S subunit. Is located at the subunit interface close to the decoding center, probably blocks exit of the E-site tRNA. In Campylobacter jejuni subsp. jejuni serotype O:6 (strain 81116 / NCTC 11828), this protein is Small ribosomal subunit protein uS7.